The primary structure comprises 130 residues: Small ribosomal subunit protein uS8 (130 aa).

The protein belongs to the universal ribosomal protein uS8 family. Part of the 30S ribosomal subunit. Contacts proteins S5 and S12.

Its function is as follows. One of the primary rRNA binding proteins, it binds directly to 16S rRNA central domain where it helps coordinate assembly of the platform of the 30S subunit. The chain is Small ribosomal subunit protein uS8 from Yersinia enterocolitica serotype O:8 / biotype 1B (strain NCTC 13174 / 8081).